Consider the following 473-residue polypeptide: Spliceosome-associated protein CWC27 homolog (473 aa).

S2 bears the N-acetylserine mark. The PPIase cyclophilin-type domain maps to 11 to 166 (TNGKVLLKTT…NPHKIKSCEV (156 aa)). Residues 177-193 (REIKRPKKEKPEEEVKK) show a composition bias toward basic and acidic residues. Disordered stretches follow at residues 177-386 (REIK…EDQT) and 399-473 (QAIA…KERR). The stretch at 206–230 (SFGEEAEEEEEEVNRVSQSMKGKSK) forms a coiled coil. Residues 231 to 241 (SSHDLLKDDPH) show a composition bias toward basic and acidic residues. The span at 257–275 (GDLDDDGEDESAEYDEYVD) shows a compositional bias: acidic residues. 3 stretches are compositionally biased toward basic and acidic residues: residues 276–287 (GDEKNLMRERIA), 305–348 (EVEK…KRSE), and 360–372 (EYRREKQKYEALR). A coiled-coil region spans residues 307-378 (EKKSVSRSEE…EALRKQQSKK (72 aa)). S347 bears the Phosphoserine mark. Acidic residues predominate over residues 405–419 (PENDIPETEVEDDEG). Basic and acidic residues-rich tracts occupy residues 426-438 (QFEDKSRKVKDAS) and 458-473 (RREESKKLMREKKERR).

This sequence belongs to the cyclophilin-type PPIase family. Part of the activated spliceosome B/catalytic step 1 spliceosome, one of the forms of the spliceosome which has a well-formed active site but still cannot catalyze the branching reaction and is composed at least of 52 proteins, the U2, U5 and U6 snRNAs and the pre-mRNA. Recruited during early steps of activated spliceosome B maturation, it is probably one of the first proteins released from this complex as he matures to the spliceosome C complex. Component of the minor spliceosome, which splices U12-type introns.

The protein localises to the nucleus. As part of the spliceosome, plays a role in pre-mRNA splicing. Probable inactive PPIase with no peptidyl-prolyl cis-trans isomerase activity. As a component of the minor spliceosome, involved in the splicing of U12-type introns in pre-mRNAs. In Macaca fascicularis (Crab-eating macaque), this protein is Spliceosome-associated protein CWC27 homolog.